We begin with the raw amino-acid sequence, 311 residues long: Aspartate carbamoyltransferase catalytic subunit (311 aa).

Arginine 55 and threonine 56 together coordinate carbamoyl phosphate. Lysine 85 provides a ligand contact to L-aspartate. Carbamoyl phosphate-binding residues include arginine 106, histidine 135, and glutamine 138. L-aspartate contacts are provided by arginine 168 and arginine 230. Carbamoyl phosphate is bound by residues leucine 268 and proline 269.

This sequence belongs to the aspartate/ornithine carbamoyltransferase superfamily. ATCase family. In terms of assembly, heterododecamer (2C3:3R2) of six catalytic PyrB chains organized as two trimers (C3), and six regulatory PyrI chains organized as three dimers (R2).

It carries out the reaction carbamoyl phosphate + L-aspartate = N-carbamoyl-L-aspartate + phosphate + H(+). It participates in pyrimidine metabolism; UMP biosynthesis via de novo pathway; (S)-dihydroorotate from bicarbonate: step 2/3. Its function is as follows. Catalyzes the condensation of carbamoyl phosphate and aspartate to form carbamoyl aspartate and inorganic phosphate, the committed step in the de novo pyrimidine nucleotide biosynthesis pathway. This chain is Aspartate carbamoyltransferase catalytic subunit, found in Baumannia cicadellinicola subsp. Homalodisca coagulata.